An 89-amino-acid chain; its full sequence is Small ribosomal subunit protein uS15 (89 aa).

This sequence belongs to the universal ribosomal protein uS15 family. Part of the 30S ribosomal subunit. Forms a bridge to the 50S subunit in the 70S ribosome, contacting the 23S rRNA.

In terms of biological role, one of the primary rRNA binding proteins, it binds directly to 16S rRNA where it helps nucleate assembly of the platform of the 30S subunit by binding and bridging several RNA helices of the 16S rRNA. Its function is as follows. Forms an intersubunit bridge (bridge B4) with the 23S rRNA of the 50S subunit in the ribosome. The chain is Small ribosomal subunit protein uS15 from Rhizobium johnstonii (strain DSM 114642 / LMG 32736 / 3841) (Rhizobium leguminosarum bv. viciae).